A 273-amino-acid chain; its full sequence is Type III pantothenate kinase (273 aa).

7 to 14 (DVGNTAIK) lines the ATP pocket. Residues F119 and 124–127 (GIDR) each bind substrate. The active-site Proton acceptor is D126. D146 contacts K(+). ATP is bound at residue T149. T206 provides a ligand contact to substrate.

The protein belongs to the type III pantothenate kinase family. Homodimer. NH4(+) serves as cofactor. The cofactor is K(+).

It is found in the cytoplasm. It carries out the reaction (R)-pantothenate + ATP = (R)-4'-phosphopantothenate + ADP + H(+). Its pathway is cofactor biosynthesis; coenzyme A biosynthesis; CoA from (R)-pantothenate: step 1/5. Catalyzes the phosphorylation of pantothenate (Pan), the first step in CoA biosynthesis. The polypeptide is Type III pantothenate kinase (Rhodopirellula baltica (strain DSM 10527 / NCIMB 13988 / SH1)).